A 133-amino-acid polypeptide reads, in one-letter code: Phosphoribosyl-AMP cyclohydrolase (133 aa).

Asp82 lines the Mg(2+) pocket. Cys83 lines the Zn(2+) pocket. Asp84 and Asp86 together coordinate Mg(2+). Positions 99 and 106 each coordinate Zn(2+).

It belongs to the PRA-CH family. In terms of assembly, homodimer. It depends on Mg(2+) as a cofactor. The cofactor is Zn(2+).

Its subcellular location is the cytoplasm. The catalysed reaction is 1-(5-phospho-beta-D-ribosyl)-5'-AMP + H2O = 1-(5-phospho-beta-D-ribosyl)-5-[(5-phospho-beta-D-ribosylamino)methylideneamino]imidazole-4-carboxamide. It participates in amino-acid biosynthesis; L-histidine biosynthesis; L-histidine from 5-phospho-alpha-D-ribose 1-diphosphate: step 3/9. Catalyzes the hydrolysis of the adenine ring of phosphoribosyl-AMP. The sequence is that of Phosphoribosyl-AMP cyclohydrolase from Rhodospirillum centenum (strain ATCC 51521 / SW).